The primary structure comprises 75 residues: Putative DNA-directed RNA polymerase subunit omega (75 aa).

This sequence belongs to the RNA polymerase subunit omega family.

It localises to the plastid. Its subcellular location is the chloroplast. It catalyses the reaction RNA(n) + a ribonucleoside 5'-triphosphate = RNA(n+1) + diphosphate. May be involved in RNA polymerase activity. The sequence is that of Putative DNA-directed RNA polymerase subunit omega from Pyropia yezoensis (Susabi-nori).